The sequence spans 323 residues: CTD kinase subunit beta (323 aa).

It belongs to the cyclin family. In terms of assembly, CTDK-I consists of three subunits, CTK1, CTK2 and CTK3 (also called alpha, beta and gamma). Interacts with CTK1. Heterodimerization with CTK3 is required to protect this subunit from degradation. Post-translationally, phosphorylated. Ubiquitinated. Phosphorylation and ubiquitination lead to degradation in growth-related way by the ubiquitin-proteasome pathway. Neither phosphorylation nor degradation requires association with CTK1.

It localises to the nucleus. It is found in the nucleolus. Functionally, cyclin subunit of the CTDK-I complex, which hyperphosphorylates the C-terminal heptapeptide repeat domain (CTD) of the largest RNA polymerase II subunit. CTDK-I phosphorylates 'Ser-5' if the CTD substrate is not phosphorylated at 'Ser-5', but will phosphorylate 'Ser-2' of a CTD substrate if 'Ser-5' is already phosphorylated. CTDK-I is also more reactive toward substrates that are prephosphorylated at 'Ser-2' or 'Ser-5' compared with an unphosphorylated CTD substrate, therefore efficiently creating doubly phosphorylated CTD repeats. Involved in RNA polymerase II transcriptional elongation, and as part of the CTDK-I complex, pre-mRNA 3'-end processing and SET2 mediated H3K36 methylation. Together with CTK3, required for CTK1 CTD kinase activation. Required for DNA damage induced transcription. Involved in the adaptation to alternative carbon sources, including galactose, glycerol and ethanol, but not raffinose. Required for the integrity of the rDNA locus. The polypeptide is CTD kinase subunit beta (CTK2) (Saccharomyces cerevisiae (strain ATCC 204508 / S288c) (Baker's yeast)).